Reading from the N-terminus, the 122-residue chain is Large ribosomal subunit protein uL14 (122 aa).

It belongs to the universal ribosomal protein uL14 family. In terms of assembly, part of the 50S ribosomal subunit. Forms a cluster with proteins L3 and L19. In the 70S ribosome, L14 and L19 interact and together make contacts with the 16S rRNA in bridges B5 and B8.

Its function is as follows. Binds to 23S rRNA. Forms part of two intersubunit bridges in the 70S ribosome. This Exiguobacterium sibiricum (strain DSM 17290 / CCUG 55495 / CIP 109462 / JCM 13490 / 255-15) protein is Large ribosomal subunit protein uL14.